The chain runs to 186 residues: TATA box-binding protein-like 1 (186 aa).

It belongs to the TBP family. Expressed ubiquitously with highest expression in the ovary and testis.

Its subcellular location is the cytoplasm. It is found in the nucleus. Part of a specialized transcription system that mediates the transcription of most ribosomal proteins through the 5'-TCT-3' motif which is a core promoter element at these genes. Seems to also mediate the transcription of NF1. Does not bind the TATA box. Members of the TBP family are differentially required to regulate transcription and development during early embryogenesis. Particularly regulates genes that have a role in catabolism. The protein is TATA box-binding protein-like 1 (tbpl1) of Xenopus laevis (African clawed frog).